Consider the following 368-residue polypeptide: Quinolinate synthase (368 aa).

Residues His-46 and Ser-63 each coordinate iminosuccinate. Cys-110 serves as a coordination point for [4Fe-4S] cluster. Residues 141–143 and Ser-162 contribute to the iminosuccinate site; that span reads YVN. Cys-230 is a [4Fe-4S] cluster binding site. Iminosuccinate is bound by residues 256–258 and Thr-273; that span reads HPE. A [4Fe-4S] cluster-binding site is contributed by Cys-320.

Belongs to the quinolinate synthase family. Type 3 subfamily. It depends on [4Fe-4S] cluster as a cofactor.

It is found in the cytoplasm. It carries out the reaction iminosuccinate + dihydroxyacetone phosphate = quinolinate + phosphate + 2 H2O + H(+). Its pathway is cofactor biosynthesis; NAD(+) biosynthesis; quinolinate from iminoaspartate: step 1/1. In terms of biological role, catalyzes the condensation of iminoaspartate with dihydroxyacetone phosphate to form quinolinate. This Bacillus cereus (strain ATCC 14579 / DSM 31 / CCUG 7414 / JCM 2152 / NBRC 15305 / NCIMB 9373 / NCTC 2599 / NRRL B-3711) protein is Quinolinate synthase.